Consider the following 280-residue polypeptide: Elongation factor Ts (280 aa).

Residues 82-85 form an involved in Mg(2+) ion dislocation from EF-Tu region; it reads TDFV.

This sequence belongs to the EF-Ts family.

It is found in the cytoplasm. In terms of biological role, associates with the EF-Tu.GDP complex and induces the exchange of GDP to GTP. It remains bound to the aminoacyl-tRNA.EF-Tu.GTP complex up to the GTP hydrolysis stage on the ribosome. In Baumannia cicadellinicola subsp. Homalodisca coagulata, this protein is Elongation factor Ts.